The chain runs to 154 residues: Sec-independent protein translocase protein TatB (154 aa).

A helical transmembrane segment spans residues 1–21 (MIDIGITKLAIIGGIALIVIG).

Belongs to the TatB family. In terms of assembly, the Tat system comprises two distinct complexes: a TatABC complex, containing multiple copies of TatA, TatB and TatC subunits, and a separate TatA complex, containing only TatA subunits. Substrates initially bind to the TatABC complex, which probably triggers association of the separate TatA complex to form the active translocon.

It localises to the cell inner membrane. Functionally, part of the twin-arginine translocation (Tat) system that transports large folded proteins containing a characteristic twin-arginine motif in their signal peptide across membranes. Together with TatC, TatB is part of a receptor directly interacting with Tat signal peptides. TatB may form an oligomeric binding site that transiently accommodates folded Tat precursor proteins before their translocation. The polypeptide is Sec-independent protein translocase protein TatB (Albidiferax ferrireducens (strain ATCC BAA-621 / DSM 15236 / T118) (Rhodoferax ferrireducens)).